A 185-amino-acid chain; its full sequence is Peptidyl-tRNA hydrolase (185 aa).

Tyr-14 contacts tRNA. The active-site Proton acceptor is His-19. TRNA contacts are provided by Tyr-64, Asn-66, and Asn-112.

Belongs to the PTH family. As to quaternary structure, monomer.

It localises to the cytoplasm. The enzyme catalyses an N-acyl-L-alpha-aminoacyl-tRNA + H2O = an N-acyl-L-amino acid + a tRNA + H(+). Functionally, hydrolyzes ribosome-free peptidyl-tRNAs (with 1 or more amino acids incorporated), which drop off the ribosome during protein synthesis, or as a result of ribosome stalling. In terms of biological role, catalyzes the release of premature peptidyl moieties from peptidyl-tRNA molecules trapped in stalled 50S ribosomal subunits, and thus maintains levels of free tRNAs and 50S ribosomes. This Exiguobacterium sibiricum (strain DSM 17290 / CCUG 55495 / CIP 109462 / JCM 13490 / 255-15) protein is Peptidyl-tRNA hydrolase.